A 336-amino-acid polypeptide reads, in one-letter code: Retinol dehydrogenase 14 (336 aa).

At Thr5 the chain carries Phosphothreonine. 50–56 (GANSGLG) contacts NADP(+). Residue Ser192 coordinates substrate. The active-site Proton acceptor is the Tyr217.

Belongs to the short-chain dehydrogenases/reductases (SDR) family. Widely expressed.

It carries out the reaction all-trans-retinol + NADP(+) = all-trans-retinal + NADPH + H(+). It catalyses the reaction 9-cis-retinol + NADP(+) = 9-cis-retinal + NADPH + H(+). The enzyme catalyses 11-cis-retinol + NADP(+) = 11-cis-retinal + NADPH + H(+). It participates in cofactor metabolism; retinol metabolism. Retinol dehydrogenase with a clear preference for NADP. Displays high activity towards 9-cis, 11-cis and all-trans-retinol. Shows a very weak activity towards 13-cis-retinol. Has no activity towards steroid. The chain is Retinol dehydrogenase 14 (RDH14) from Homo sapiens (Human).